We begin with the raw amino-acid sequence, 527 residues long: Cytokinin dehydrogenase 6 (527 aa).

Residues 1-22 (MAARCSIAFMVMASCLSVVVSG) form the signal peptide. The FAD-binding PCMH-type domain occupies 55 to 236 (VAAAPEAVLH…TRARIGLEPA (182 aa)). FAD contacts are provided by Gly91 and Gly93. His94 is subject to Pros-8alpha-FAD histidine. Residues Ser95 and Gln99 each coordinate FAD. Asn121 is a glycosylation site (N-linked (GlcNAc...) asparagine). FAD-binding residues include Asp160, Thr165, Ser171, Ile175, and Ile226. N-linked (GlcNAc...) asparagine glycans are attached at residues Asn280 and Asn323. 3 residues coordinate FAD: Tyr475, Ser510, and Gln513.

The protein belongs to the oxygen-dependent FAD-linked oxidoreductase family. Monomer. FAD serves as cofactor.

Its subcellular location is the secreted. The protein localises to the extracellular space. The catalysed reaction is N(6)-dimethylallyladenine + A + H2O = 3-methyl-2-butenal + adenine + AH2. Its function is as follows. Catalyzes the oxidation of cytokinins, a family of N(6)-substituted adenine derivatives that are plant hormones, where the substituent is an isopentenyl group. This Oryza sativa subsp. japonica (Rice) protein is Cytokinin dehydrogenase 6 (CKX6).